We begin with the raw amino-acid sequence, 500 residues long: Glycerol kinase (500 aa).

Threonine 17 contacts ADP. The ATP site is built by threonine 17, threonine 18, and serine 19. Residue threonine 17 participates in sn-glycerol 3-phosphate binding. ADP is bound at residue arginine 21. Residues arginine 87, glutamate 88, tyrosine 139, and aspartate 243 each coordinate sn-glycerol 3-phosphate. Residues arginine 87, glutamate 88, tyrosine 139, aspartate 243, and glutamine 244 each contribute to the glycerol site. ADP contacts are provided by threonine 265 and glycine 308. Threonine 265, glycine 308, glutamine 312, and glycine 409 together coordinate ATP. Glycine 409 and asparagine 413 together coordinate ADP.

This sequence belongs to the FGGY kinase family.

It catalyses the reaction glycerol + ATP = sn-glycerol 3-phosphate + ADP + H(+). The protein operates within polyol metabolism; glycerol degradation via glycerol kinase pathway; sn-glycerol 3-phosphate from glycerol: step 1/1. Inhibited by fructose 1,6-bisphosphate (FBP). Key enzyme in the regulation of glycerol uptake and metabolism. Catalyzes the phosphorylation of glycerol to yield sn-glycerol 3-phosphate. The protein is Glycerol kinase of Pseudomonas fluorescens (strain Pf0-1).